Reading from the N-terminus, the 521-residue chain is Insulinoma-associated protein 1 (521 aa).

Over residues methionine 1–lysine 12 the composition is skewed to basic residues. An SNAG domain region spans residues methionine 1–valine 20. Disordered stretches follow at residues methionine 1–leucine 59, glycine 76–proline 107, and alanine 180–alanine 230. The tract at residues proline 2–valine 7 is required and sufficient for interaction with KDM1A. The interval proline 43–proline 56 is necessary for interaction with CCND1. Composition is skewed to pro residues over residues proline 43–alanine 58 and glycine 76–proline 85. Residues alanine 209–proline 223 show a composition bias toward low complexity. Residues phenylalanine 272 to cysteine 292 form a C2H2-type 1; atypical zinc finger. Residues tyrosine 300–histidine 322 form a C2H2-type 2 zinc finger. Positions arginine 320–glutamate 369 are disordered. The segment covering proline 334–glutamate 346 has biased composition (basic and acidic residues). Residues tyrosine 373–histidine 395 form a C2H2-type 3 zinc finger. The tract at residues alanine 398 to leucine 419 is disordered. The span at alanine 404–alanine 415 shows a compositional bias: pro residues. C2H2-type zinc fingers lie at residues histidine 452 to histidine 475 and phenylalanine 480 to histidine 503.

The protein belongs to the INSM1 family. As to quaternary structure, interacts (via the N-terminal region) with CCND1 (via cyclin N-terminal domain); the interaction competes with the binding of CCND1 to CDK4 during cell cycle progression and increases its transcriptional repressor activity. Interacts with HDAC3; the interaction increases its transcriptional repressor activity. Interacts (via the SNAG domain) with HDAC1. Interacts (via the SNAG domain) with HDAC2. Interacts (via the SNAG domain) with KDM1A. Interacts (via the SNAG domain) with RCOR1. Interacts with SORBS1. As to expression, expressed in adrenal gland. Expressed in the dentate gyrus of the hippocampus and the wall of the lateral ventricle. Expressed in pancreatic and intestinal endocrine cells.

The protein resides in the nucleus. Its function is as follows. Sequence-specific DNA-binding transcriptional regulator that plays a key role in neurogenesis and neuroendocrine cell differentiation during embryonic and/or fetal development. Binds to the consensus sequence 5'-[TG][TC][TC][TT][GA]GGG[CG]A-3' in target promoters. Acts as a transcriptional repressor of NEUROD1 and INS expression via its interaction with cyclin CCND1 in a cell cycle-independent manner. Negatively regulates skeletal muscle-specific gene expression in endocrine cells of the pituitary by inhibiting the Notch signaling pathway. Represses target gene transcription by recruiting chromatin-modifying factors, such as HDAC1, HDAC2, HDAC3, KDM1A and RCOR1 histone deacetylases. Binds to its own promoter, suggesting autoregulation as a self-control feedback mechanism. Competes with histone H3 for the same binding site on the histone demethylase complex formed by KDM1A and RCOR1, and thereby inhibits demethylation of histone H3 at 'Lys-4'. Promotes the generation and expansion of neuronal basal progenitor cells in the developing neocortex. Involved in the differentiation of endocrine cells of the developing anterior pituitary gland, of the pancreas and intestine, and of sympatho-adrenal cells in the peripheral nervous system. Promotes cell cycle signaling arrest and inhibition of cellular proliferation. This chain is Insulinoma-associated protein 1 (Insm1), found in Mus musculus (Mouse).